Reading from the N-terminus, the 553-residue chain is Solute carrier family 45 member 3 (553 aa).

11 helical membrane passes run 19–39 (LLVNLLTFGLEVCLAAGITYV), 52–72 (FMTMVLGIGPVLGLVSVPLLG), 88–108 (FIWALSLGVLLSLFLIPRAGW), 120–140 (LELALLILGVGLLDFCGQVCF), 161–181 (FSVYAFMISLGGCLGYLLPAI), 198–218 (CLFGLLTLIFLICMAATLFVT), 275–295 (FVAELCSWMALMTFTLFYTDF), 323–343 (MGSLGLFLQCAISLVFSLVMD), 353–373 (SVYLASVMTFPVAAAATCLSH), 382–402 (AALTGFTFSALQILPYTLASL), and 522–542 (AYMVSAAGLGLVAIYFATQVV).

It belongs to the glycoside-pentoside-hexuronide (GPH) cation symporter transporter (TC 2.A.2) family. Expressed in the epididymis. Primarily expressed in the prostate, but also in other tissues.

Its subcellular location is the membrane. It catalyses the reaction sucrose(out) + H(+)(out) = sucrose(in) + H(+)(in). Its function is as follows. Proton-associated sucrose transporter. May be able to transport also glucose and fructose. This is Solute carrier family 45 member 3 (Slc45a3) from Mus musculus (Mouse).